The following is a 257-amino-acid chain: UPF0246 protein RSKD131_2757 (257 aa).

It belongs to the UPF0246 family.

This chain is UPF0246 protein RSKD131_2757, found in Cereibacter sphaeroides (strain KD131 / KCTC 12085) (Rhodobacter sphaeroides).